A 465-amino-acid chain; its full sequence is Alpha-2A adrenergic receptor (465 aa).

Over 1-48 (MFRQEQPLAEGSFAPMGSLQPDAGNSSWNGTEAPGGGTRATPYSLQVT) the chain is Extracellular. Asn25 and Asn29 each carry an N-linked (GlcNAc...) asparagine glycan. Residues 49–74 (LTLVCLAGLLMLFTVFGNVLVIIAVF) form a helical membrane-spanning segment. Topologically, residues 75–85 (TSRALKAPQNL) are cytoplasmic. The helical transmembrane segment at 86–111 (FLVSLASADILVATLVIPFSLANEVM) threads the bilayer. At 112–121 (GYWYFGKVWC) the chain is on the extracellular side. Cys121 and Cys203 are oxidised to a cystine. Residues 122–144 (EIYLALDVLFCTSSIVHLCAISL) form a helical membrane-spanning segment. The Cytoplasmic segment spans residues 145–164 (DRYWSITQAIEYNLKRTPRR). A helical membrane pass occupies residues 165–188 (IKAIIVTVWVISAVISFPPLISIE). The Extracellular portion of the chain corresponds to 189–207 (KKGAGGGQQPAEPSCKIND). The chain crosses the membrane as a helical span at residues 208 to 232 (QKWYVISSSIGSFFAPCLIMILVYV). Over 233–389 (RIYQIAKRRT…RQNREKRFTF (157 aa)) the chain is Cytoplasmic. The tract at residues 242–378 (TRVPPSRRGP…GGGAKASRWR (137 aa)) is disordered. Residues 313–330 (SSEHAERPPGPRRPDRGP) are compositionally biased toward basic and acidic residues. Ser346 carries the phosphoserine modification. Residues 353–363 (GAAGPGASGSG) are compositionally biased toward gly residues. Arg368 carries the post-translational modification Omega-N-methylarginine. A helical membrane pass occupies residues 390–414 (VLAVVIGVFVVCWFPFFFTYTLIAV). The Extracellular segment spans residues 415 to 424 (GCPVPSQLFN). A helical membrane pass occupies residues 425 to 445 (FFFWFGYCNSSLNPVIYTIFN). At 446–465 (HDFRRAFKKILCRGDRKRIV) the chain is on the cytoplasmic side. Cys457 is lipidated: S-palmitoyl cysteine.

The protein belongs to the G-protein coupled receptor 1 family. Adrenergic receptor subfamily. ADRA2A sub-subfamily.

It is found in the cell membrane. In terms of biological role, alpha-2 adrenergic receptors mediate the catecholamine-induced inhibition of adenylate cyclase through the action of G proteins. The chain is Alpha-2A adrenergic receptor from Mus musculus (Mouse).